Reading from the N-terminus, the 104-residue chain is Large ribosomal subunit protein uL24 (104 aa).

It belongs to the universal ribosomal protein uL24 family. As to quaternary structure, part of the 50S ribosomal subunit.

One of two assembly initiator proteins, it binds directly to the 5'-end of the 23S rRNA, where it nucleates assembly of the 50S subunit. In terms of biological role, one of the proteins that surrounds the polypeptide exit tunnel on the outside of the subunit. This chain is Large ribosomal subunit protein uL24, found in Shewanella baltica (strain OS223).